We begin with the raw amino-acid sequence, 712 residues long: Translation initiation factor eIF2B subunit epsilon (712 aa).

Positions 1-20 (MAGKKGQKKSGLGNHGKNSD) are disordered. 6 positions are modified to phosphoserine: serine 478, serine 481, serine 507, serine 525, serine 538, and serine 707. The region spanning 539–710 (EFEDEDFEKE…QNADEESSSE (172 aa)) is the W2 domain.

The protein belongs to the eIF-2B gamma/epsilon subunits family. Component of the translation initiation factor 2B (eIF2B) complex which is a heterodecamer of two sets of five different subunits: alpha, beta, gamma, delta and epsilon. Subunits alpha, beta and delta comprise a regulatory subcomplex and subunits epsilon and gamma comprise a catalytic subcomplex. Within the complex, the hexameric regulatory complex resides at the center, with the two heterodimeric catalytic subcomplexes bound on opposite sides.

Its subcellular location is the cytoplasm. It localises to the cytosol. Its function is as follows. Acts as a catalytic component of the translation initiation factor 2B (eIF2B) complex, which catalyzes the exchange of GDP for GTP on eukaryotic initiation factor 2 (eIF2) and is regulated by phosphorylated eIF2. Its guanine nucleotide exchange factor activity is repressed when bound to eIF2 complex phosphorylated on the alpha subunit, thereby limiting the amount of methionyl-initiator methionine tRNA available to the ribosome and consequently global translation is repressed. It activates the synthesis of GCN4 in yeast under amino acid starvation conditions by suppressing the inhibitory effects of multiple AUG codons present in the leader of GCN4 mRNA. It may promote either repression or activation of GCN4 expression depending on amino acid availability. GCD6 and GCD7 repress GCN4 expression at the translational level by ensuring that ribosomes which have translated UORF1 will reinitiate at UORF2, -3, or -4 and thus fail to reach the GCN4 start site. This chain is Translation initiation factor eIF2B subunit epsilon (GCD6), found in Saccharomyces cerevisiae (strain ATCC 204508 / S288c) (Baker's yeast).